We begin with the raw amino-acid sequence, 598 residues long: Aspartate--tRNA(Asp/Asn) ligase (598 aa).

Glu-172 contacts L-aspartate. The tract at residues 196 to 199 (QLFK) is aspartate. Position 218 (Arg-218) interacts with L-aspartate. ATP-binding positions include 218-220 (RDE) and Gln-227. L-aspartate is bound at residue His-454. Residue Glu-488 participates in ATP binding. Arg-495 serves as a coordination point for L-aspartate. Residue 540–543 (GLDR) participates in ATP binding.

This sequence belongs to the class-II aminoacyl-tRNA synthetase family. Type 1 subfamily. In terms of assembly, homodimer.

Its subcellular location is the cytoplasm. The enzyme catalyses tRNA(Asx) + L-aspartate + ATP = L-aspartyl-tRNA(Asx) + AMP + diphosphate. Functionally, aspartyl-tRNA synthetase with relaxed tRNA specificity since it is able to aspartylate not only its cognate tRNA(Asp) but also tRNA(Asn). Reaction proceeds in two steps: L-aspartate is first activated by ATP to form Asp-AMP and then transferred to the acceptor end of tRNA(Asp/Asn). The chain is Aspartate--tRNA(Asp/Asn) ligase from Leptothrix cholodnii (strain ATCC 51168 / LMG 8142 / SP-6) (Leptothrix discophora (strain SP-6)).